Here is a 354-residue protein sequence, read N- to C-terminus: S-adenosylmethionine:tRNA ribosyltransferase-isomerase (354 aa).

The protein belongs to the QueA family. In terms of assembly, monomer.

Its subcellular location is the cytoplasm. It carries out the reaction 7-aminomethyl-7-carbaguanosine(34) in tRNA + S-adenosyl-L-methionine = epoxyqueuosine(34) in tRNA + adenine + L-methionine + 2 H(+). Its pathway is tRNA modification; tRNA-queuosine biosynthesis. Functionally, transfers and isomerizes the ribose moiety from AdoMet to the 7-aminomethyl group of 7-deazaguanine (preQ1-tRNA) to give epoxyqueuosine (oQ-tRNA). The polypeptide is S-adenosylmethionine:tRNA ribosyltransferase-isomerase (Dichelobacter nodosus (strain VCS1703A)).